The following is a 185-amino-acid chain: Elongation factor P (185 aa).

It belongs to the elongation factor P family.

The protein localises to the cytoplasm. The protein operates within protein biosynthesis; polypeptide chain elongation. Involved in peptide bond synthesis. Stimulates efficient translation and peptide-bond synthesis on native or reconstituted 70S ribosomes in vitro. Probably functions indirectly by altering the affinity of the ribosome for aminoacyl-tRNA, thus increasing their reactivity as acceptors for peptidyl transferase. The chain is Elongation factor P from Streptococcus pyogenes serotype M4 (strain MGAS10750).